A 444-amino-acid chain; its full sequence is C4-dicarboxylate transport protein 3 (444 aa).

9 helical membrane passes run 22-42, 60-80, 95-115, 162-182, 198-218, 236-256, 321-341, 346-366, and 399-419; these read VLYV…WLWP, LIKM…IAHI, VYFE…GNLV, GEIL…MSLG, AVFG…FGAM, LIAT…GIIA, IYMT…LSFG, ILVV…AGFI, and LTNL…EGEL.

The protein belongs to the dicarboxylate/amino acid:cation symporter (DAACS) (TC 2.A.23) family.

Its subcellular location is the cell inner membrane. In terms of biological role, responsible for the transport of dicarboxylates such as succinate, fumarate, and malate from the periplasm across the membrane. In Bradyrhizobium diazoefficiens (strain JCM 10833 / BCRC 13528 / IAM 13628 / NBRC 14792 / USDA 110), this protein is C4-dicarboxylate transport protein 3.